Reading from the N-terminus, the 276-residue chain is NH(3)-dependent NAD(+) synthetase (276 aa).

43–50 provides a ligand contact to ATP; sequence GISGGVDS. Asp49 contacts Mg(2+). Arg146 contacts deamido-NAD(+). Thr166 contributes to the ATP binding site. Position 171 (Glu171) interacts with Mg(2+). Deamido-NAD(+) is bound by residues Lys179 and Asp186. ATP contacts are provided by Lys195 and Thr217. 266–267 lines the deamido-NAD(+) pocket; it reads HK.

Belongs to the NAD synthetase family. In terms of assembly, homodimer.

It catalyses the reaction deamido-NAD(+) + NH4(+) + ATP = AMP + diphosphate + NAD(+) + H(+). It functions in the pathway cofactor biosynthesis; NAD(+) biosynthesis; NAD(+) from deamido-NAD(+) (ammonia route): step 1/1. Its function is as follows. Catalyzes the ATP-dependent amidation of deamido-NAD to form NAD. Uses ammonia as a nitrogen source. The protein is NH(3)-dependent NAD(+) synthetase of Psychromonas ingrahamii (strain DSM 17664 / CCUG 51855 / 37).